Reading from the N-terminus, the 269-residue chain is Interleukin-1 beta (269 aa).

Positions 1–116 (MAEVPELASE…TRNNDACVHD (116 aa)) are excised as a propeptide.

It belongs to the IL-1 family. As to quaternary structure, monomer. In its precursor form, weakly interacts with full-length MEFV; the mature cytokine does not interact at all. Interacts with integrins ITGAV:ITGBV and ITGA5:ITGB1; integrin-binding is required for IL1B signaling. Interacts with cargo receptor TMED10; the interaction is direct and is required for the secretion of IL1B mature form. Interacts with HSP90AB1; the interaction facilitates cargo translocation into the ERGIC. Interacts with HSP90B1; the interaction facilitates cargo translocation into the ERGIC.

It localises to the cytoplasm. The protein localises to the cytosol. It is found in the secreted. The protein resides in the lysosome. Its subcellular location is the extracellular exosome. In terms of biological role, potent pro-inflammatory cytokine. Initially discovered as the major endogenous pyrogen, induces prostaglandin synthesis, neutrophil influx and activation, T-cell activation and cytokine production, B-cell activation and antibody production, and fibroblast proliferation and collagen production. Promotes Th17 differentiation of T-cells. Synergizes with IL12/interleukin-12 to induce IFNG synthesis from T-helper 1 (Th1) cells. Plays a role in angiogenesis by inducing VEGF production synergistically with TNF and IL6. Involved in transduction of inflammation downstream of pyroptosis: its mature form is specifically released in the extracellular milieu by passing through the gasdermin-D (GSDMD) pore. In Macaca mulatta (Rhesus macaque), this protein is Interleukin-1 beta (IL1B).